Here is a 129-residue protein sequence, read N- to C-terminus: Small ribosomal subunit protein uS11 (129 aa).

It belongs to the universal ribosomal protein uS11 family. In terms of assembly, part of the 30S ribosomal subunit. Interacts with proteins S7 and S18. Binds to IF-3.

Functionally, located on the platform of the 30S subunit, it bridges several disparate RNA helices of the 16S rRNA. Forms part of the Shine-Dalgarno cleft in the 70S ribosome. The sequence is that of Small ribosomal subunit protein uS11 from Thermosipho africanus (strain TCF52B).